The chain runs to 371 residues: Putative glutamate--cysteine ligase 2 (371 aa).

Belongs to the glutamate--cysteine ligase type 2 family. YbdK subfamily.

It carries out the reaction L-cysteine + L-glutamate + ATP = gamma-L-glutamyl-L-cysteine + ADP + phosphate + H(+). Functionally, ATP-dependent carboxylate-amine ligase which exhibits weak glutamate--cysteine ligase activity. In Burkholderia cenocepacia (strain HI2424), this protein is Putative glutamate--cysteine ligase 2.